The chain runs to 270 residues: Putative methylsterol monooxygenase DDB_G0269788 (270 aa).

3 helical membrane passes run 31–51 (FIAH…CDFM), 82–102 (IFVQ…IGLS), and 110–130 (IPYL…YFYW). The 132-residue stretch at 118-249 (ACCFLIEDFY…FTYLDKIFGT (132 aa)) folds into the Fatty acid hydroxylase domain. A Histidine box-1 motif is present at residues 132-136 (HRALH). Residues 145 to 149 (HKVHH) carry the Histidine box-2 motif. A Histidine box-3 motif is present at residues 224–230 (FHDFHHE).

The protein belongs to the sterol desaturase family. The cofactor is Fe cation.

It localises to the endoplasmic reticulum membrane. The catalysed reaction is 4,4-dimethyl-5alpha-cholest-7-en-3beta-ol + 6 Fe(II)-[cytochrome b5] + 3 O2 + 5 H(+) = 4alpha-carboxy-4beta-methyl-5alpha-cholest-7-ene-3beta-ol + 6 Fe(III)-[cytochrome b5] + 4 H2O. It functions in the pathway steroid biosynthesis; zymosterol biosynthesis; zymosterol from lanosterol: step 3/6. The chain is Putative methylsterol monooxygenase DDB_G0269788 from Dictyostelium discoideum (Social amoeba).